The primary structure comprises 194 residues: Ribonuclease VapC1 (194 aa).

Positions 34 to 134 (YVIDTSAIIS…TDDYSIQNVA (101 aa)) constitute a PINc domain. Aspartate 37 and aspartate 150 together coordinate Mg(2+).

The protein belongs to the PINc/VapC protein family. Mg(2+) serves as cofactor.

Toxic component of a type II toxin-antitoxin (TA) system. An RNase. This is Ribonuclease VapC1 from Thermoplasma acidophilum (strain ATCC 25905 / DSM 1728 / JCM 9062 / NBRC 15155 / AMRC-C165).